We begin with the raw amino-acid sequence, 465 residues long: Ribulose bisphosphate carboxylase large chain (465 aa).

N6,N6,N6-trimethyllysine is present on lysine 4. Residues asparagine 113 and threonine 163 each contribute to the substrate site. The active-site Proton acceptor is the lysine 165. A substrate-binding site is contributed by lysine 167. The Mg(2+) site is built by lysine 191, aspartate 193, and glutamate 194. Lysine 191 bears the N6-carboxylysine mark. Histidine 284 serves as the catalytic Proton acceptor. Positions 285, 317, and 369 each coordinate substrate.

Belongs to the RuBisCO large chain family. Type I subfamily. In terms of assembly, heterohexadecamer of 8 large chains and 8 small chains; disulfide-linked. The disulfide link is formed within the large subunit homodimers. It depends on Mg(2+) as a cofactor. The disulfide bond which can form in the large chain dimeric partners within the hexadecamer appears to be associated with oxidative stress and protein turnover.

The protein resides in the plastid. It localises to the chloroplast. It carries out the reaction 2 (2R)-3-phosphoglycerate + 2 H(+) = D-ribulose 1,5-bisphosphate + CO2 + H2O. The enzyme catalyses D-ribulose 1,5-bisphosphate + O2 = 2-phosphoglycolate + (2R)-3-phosphoglycerate + 2 H(+). RuBisCO catalyzes two reactions: the carboxylation of D-ribulose 1,5-bisphosphate, the primary event in carbon dioxide fixation, as well as the oxidative fragmentation of the pentose substrate in the photorespiration process. Both reactions occur simultaneously and in competition at the same active site. The protein is Ribulose bisphosphate carboxylase large chain of Clitoria ternatea (Butterfly pea).